A 129-amino-acid polypeptide reads, in one-letter code: Ubiquinol-cytochrome-c reductase complex assembly factor 2 (129 aa).

A mitochondrion-targeting transit peptide spans 1–13 (MSATRYRRFLKLC).

The protein resides in the mitochondrion matrix. The protein localises to the mitochondrion nucleoid. It is found in the mitochondrion. Required for the assembly of the ubiquinol-cytochrome c reductase complex (mitochondrial respiratory chain complex III or cytochrome b-c1 complex). May play a role in the modulation of respiratory chain activities such as oxygen consumption and ATP production. May be involved in cytochrome b translation and/or stability. This Danio rerio (Zebrafish) protein is Ubiquinol-cytochrome-c reductase complex assembly factor 2 (uqcc2).